Here is a 132-residue protein sequence, read N- to C-terminus: Large ribosomal subunit protein uL22 (132 aa).

The protein belongs to the universal ribosomal protein uL22 family. In terms of assembly, part of the 50S ribosomal subunit.

Functionally, this protein binds specifically to 23S rRNA; its binding is stimulated by other ribosomal proteins, e.g. L4, L17, and L20. It is important during the early stages of 50S assembly. It makes multiple contacts with different domains of the 23S rRNA in the assembled 50S subunit and ribosome. The globular domain of the protein is located near the polypeptide exit tunnel on the outside of the subunit, while an extended beta-hairpin is found that lines the wall of the exit tunnel in the center of the 70S ribosome. The protein is Large ribosomal subunit protein uL22 of Pelagibacter ubique (strain HTCC1062).